Here is a 188-residue protein sequence, read N- to C-terminus: Inosine triphosphate pyrophosphatase (188 aa).

7–12 (TGNAGK) is a binding site for ITP. E36 provides a ligand contact to Mg(2+). Residues K48, 64–65 (DT), K81, 140–143 (FGWN), K163, and 168–169 (HR) each bind ITP.

This sequence belongs to the HAM1 NTPase family. In terms of assembly, homodimer. Requires Mg(2+) as cofactor. The cofactor is Mn(2+).

It localises to the cytoplasm. Its subcellular location is the nucleus. It catalyses the reaction ITP + H2O = IMP + diphosphate + H(+). The enzyme catalyses dITP + H2O = dIMP + diphosphate + H(+). It carries out the reaction XTP + H2O = XMP + diphosphate + H(+). In terms of biological role, pyrophosphatase that hydrolyzes non-canonical purine nucleotides such as inosine triphosphate (ITP), deoxyinosine triphosphate (dITP) or xanthosine 5'-triphosphate (XTP) to their respective monophosphate derivatives. The enzyme does not distinguish between the deoxy- and ribose forms. Probably excludes non-canonical purines from RNA and DNA precursor pools, thus preventing their incorporation into RNA and DNA and avoiding chromosomal lesions. In Yarrowia lipolytica (strain CLIB 122 / E 150) (Yeast), this protein is Inosine triphosphate pyrophosphatase.